The chain runs to 144 residues: uncharacterized protein (144 aa).

Residues 125–135 show a composition bias toward polar residues; it reads PQQQNNHQLQS. A disordered region spans residues 125 to 144; sequence PQQQNNHQLQSKPKAASISR.

This is an uncharacterized protein from Rickettsia prowazekii (strain Madrid E).